A 202-amino-acid chain; its full sequence is Complement component C8 gamma chain (202 aa).

The signal sequence occupies residues 1–20; sequence MLPPGTATLLTLLLAAGSLG. Glutamine 21 carries the post-translational modification Pyrrolidone carboxylic acid. An intrachain disulfide couples cysteine 96 to cysteine 188.

The protein belongs to the calycin superfamily. Lipocalin family. As to quaternary structure, heterotrimer of 3 chains: alpha (C8A), beta (C8B) and gamma (C8G); the alpha and gamma chains are disulfide bonded. Component of the membrane attack complex (MAC), composed of complement C5b, C6, C7, C8A, C8B, C8G and multiple copies of the pore-forming subunit C9.

It is found in the secreted. Its subcellular location is the target cell membrane. Membrane attack complex (MAC) assembly is inhibited by CD59, thereby protecting self-cells from damage during complement activation. MAC assembly is also inhibited by clusterin (CLU) chaperones that inhibit polymerization of C9. Functionally, component of the membrane attack complex (MAC), a multiprotein complex activated by the complement cascade, which inserts into a target cell membrane and forms a pore, leading to target cell membrane rupture and cell lysis. The MAC is initiated by proteolytic cleavage of C5 into complement C5b in response to the classical, alternative, lectin and GZMK complement pathways. The complement pathways consist in a cascade of proteins that leads to phagocytosis and breakdown of pathogens and signaling that strengthens the adaptive immune system. C8G, together with C8A and C8B, inserts into the target membrane, but does not form pores by itself. During MAC assembly, associates with C5b, C6 and C7 to form the C5b8 intermediate complex that inserts into the target membrane and traverses the bilayer increasing membrane rigidity. The protein is Complement component C8 gamma chain of Homo sapiens (Human).